The chain runs to 507 residues: Xaa-Pro aminopeptidase 3 (507 aa).

A mitochondrion-targeting transit peptide spans 1 to 31 (MPWLLSAPKLVPAVANVRGLSGCMLCSQRRY). The tract at residues 54 to 79 (HPHLLRPGEVTPGLSQVEYALRRHKL) is interaction with TNFRSF1B. Residues Y300, D331, D342, H424, H431, E451, and E475 each coordinate substrate. 3 residues coordinate Mn(2+): D331, D342, and H424. Mn(2+) contacts are provided by E451 and E475.

Belongs to the peptidase M24B family. Homodimer. Isoform 1 interacts with TNFRSF1B/TNFR2 (activated) and TRAF2. It depends on Mn(2+) as a cofactor. In terms of tissue distribution, isoform 1 and isoform 2 are widely expressed, with isoform 1 being more abundant.

The protein resides in the mitochondrion. It localises to the cytoplasm. The enzyme catalyses Release of any N-terminal amino acid, including proline, that is linked to proline, even from a dipeptide or tripeptide.. In terms of biological role, catalyzes the removal of a penultimate prolyl residue from the N-termini of peptides, such as Leu-Pro-Ala. Also shows low activity towards peptides with Ala or Ser at the P1 position. Functionally, promotes TNFRSF1B-mediated phosphorylation of MAPK8/JNK1 and MAPK9/JNK2, suggesting a function as an adapter protein for TNFRSF1B; the effect is independent of XPNPEP3 peptidase activity. May inhibit apoptotic cell death induced via TNF-TNFRSF1B signaling. This chain is Xaa-Pro aminopeptidase 3 (XPNPEP3), found in Homo sapiens (Human).